The chain runs to 144 residues: Large ribosomal subunit protein uL15 (144 aa).

The interval 1 to 54 (MRLNTLSPAAGAKHAPKRVGRGMGSGLGKTAGRGHKGQKSRSGGGVRPGFEGGQ) is disordered. Gly residues-rich tracts occupy residues 21 to 31 (RGMGSGLGKTA) and 42 to 52 (SGGGVRPGFEG).

This sequence belongs to the universal ribosomal protein uL15 family. Part of the 50S ribosomal subunit.

Binds to the 23S rRNA. This is Large ribosomal subunit protein uL15 from Shewanella oneidensis (strain ATCC 700550 / JCM 31522 / CIP 106686 / LMG 19005 / NCIMB 14063 / MR-1).